Reading from the N-terminus, the 528-residue chain is Linear element-associated protein hop1 (528 aa).

Residues 11 to 212 (TKSDFTLKNL…RGEFKDIVSF (202 aa)) enclose the HORMA domain. A PHD-type zinc finger spans residues 334 to 385 (LLNCECGDSTEDSEMFQCERCDGWVHCACYGFESDSDPRQPNQLLCYTCLLV). Residues cysteine 337, cysteine 339, cysteine 351, cysteine 354, histidine 359, cysteine 362, cysteine 379, and cysteine 382 each coordinate Zn(2+). Residues 507-528 (RPKKVSKTSNTKETDTMKPLRI) form a disordered region. Over residues 516-528 (NTKETDTMKPLRI) the composition is skewed to basic and acidic residues.

As to quaternary structure, interacts (via N-terminus) with rec10; the interaction is direct. Interacts (via C-terminus) with rec15 (via C-terminus); the interaction is direct.

The protein localises to the nucleus. It is found in the chromosome. Functionally, facilitates initiation of meiotic recombination and DNA double-strand break (DSB) formation at DSB hotspot sites by enhancing the interaction between rec10 and rec15. The protein is Linear element-associated protein hop1 of Schizosaccharomyces pombe (strain 972 / ATCC 24843) (Fission yeast).